Here is a 202-residue protein sequence, read N- to C-terminus: V-type proton ATPase subunit E (202 aa).

This sequence belongs to the V-ATPase E subunit family.

In terms of biological role, produces ATP from ADP in the presence of a proton gradient across the membrane. The sequence is that of V-type proton ATPase subunit E from Halothermothrix orenii (strain H 168 / OCM 544 / DSM 9562).